The following is a 420-amino-acid chain: MAPLPPRGLVPSLLWCLSLFLSLPGPVWLQPSPPPHPSPRAEPHPCHTCRALVDNFNKGLERTIRDNFGGGNTAWEEEKLSKYKDSETRLVEVLEGVCSRSDFECHRLLELSEELVENWWFHRQQEAPDLFQWLCSDSLKLCCPSGTFGPSCLPCPGGTERPCGGYGQCEGEGTRGGSGHCDCQAGYGGEACGQCGLGYFEAERNSSHLVCSACFGPCARCTGPEESHCLQCKKGWALHHLKCVDIDECGTEQATCGADQFCVNTEGSYECRDCAKACLGCMGAGPGRCKKCSRGYQQVGSKCLDVDECETVVCPGENEKCENTEGGYRCVCAEGYRQEDGICVKEQVPESAGFFAEMTEDEMVVLQQMFFGVIICALATLAAKGDLVFTAIFIGAVAAMTGYWLSERSDRVLEGFIKGR.

Residues 1–29 (MAPLPPRGLVPSLLWCLSLFLSLPGPVWL) form the signal peptide. The Extracellular segment spans residues 30-362 (QPSPPPHPSP…GFFAEMTEDE (333 aa)). The CXXC motif lies at 46–49 (CHTC). Cystine bridges form between C46-C49, C155-C169, C163-C181, and C183-C192. The EGF-like 1 domain maps to 153–193 (LPCPGGTERPCGGYGQCEGEGTRGGSGHCDCQAGYGGEACG). N205 carries an N-linked (GlcNAc...) asparagine glycan. 2 FU repeats span residues 208-255 (HLVC…EQAT) and 268-315 (SYEC…VVCP). Residues 278–281 (CLGC) carry the CXXC motif. Cystine bridges form between C278–C281, C309–C321, C314–C330, and C332–C343. The EGF-like 2; calcium-binding domain maps to 305–342 (DVDECETVVCPGENEKCENTEGGYRCVCAEGYRQEDGI). Residues 363 to 383 (MVVLQQMFFGVIICALATLAA) form a helical membrane-spanning segment. K384 is a topological domain (cytoplasmic). A helical membrane pass occupies residues 385–405 (GDLVFTAIFIGAVAAMTGYWL). Over 406 to 420 (SERSDRVLEGFIKGR) the chain is Extracellular.

It belongs to the CRELD family. Expressed in myoblast C2C12 cells (at protein level).

The protein resides in the membrane. It catalyses the reaction Catalyzes the rearrangement of -S-S- bonds in proteins.. In terms of biological role, protein disulfide isomerase. Promotes the localization of acetylcholine receptors (AChRs) to the plasma membrane. In Mus musculus (Mouse), this protein is Protein disulfide isomerase Creld1 (Creld1).